The sequence spans 913 residues: Chitin synthase 1 (913 aa).

A disordered region spans residues 1-135 (MAYRGGGPND…QQPGAQTGGL (135 aa)). N25 is a glycosylation site (N-linked (GlcNAc...) asparagine). Over residues 41 to 56 (RDPHARGTSPYEHHLG) the composition is skewed to basic and acidic residues. A glycan (N-linked (GlcNAc...) asparagine) is linked at N539. 7 consecutive transmembrane segments (helical) span residues 566–586 (FFFH…WFSL), 625–645 (IINS…FVLA), 658–678 (IASF…SGYL), 712–732 (VILV…FMYL), 740–760 (SFPY…VYAF), 840–860 (TGLV…ITTD), and 881–901 (FLLY…LWFL).

The protein belongs to the chitin synthase family. Class III subfamily.

It is found in the cell membrane. It catalyses the reaction [(1-&gt;4)-N-acetyl-beta-D-glucosaminyl](n) + UDP-N-acetyl-alpha-D-glucosamine = [(1-&gt;4)-N-acetyl-beta-D-glucosaminyl](n+1) + UDP + H(+). Polymerizes chitin, a structural polymer of the cell wall and septum, by transferring the sugar moiety of UDP-GlcNAc to the non-reducing end of the growing chitin polymer. Plays a role in cell wall integrity and is involved in tolerance to hyperosmotic conditions. Required to successfully penetrate the host plants and thus plays a key role in pathogenicity. The sequence is that of Chitin synthase 1 from Verticillium dahliae (strain VdLs.17 / ATCC MYA-4575 / FGSC 10137) (Verticillium wilt).